Reading from the N-terminus, the 111-residue chain is uncharacterized protein (111 aa).

The disordered stretch occupies residues 43 to 72 (NGRAEETEADAPLPEEPSLPDLPDLSDLDS). Residues 61 to 72 (LPDLPDLSDLDS) are compositionally biased toward low complexity.

This is an uncharacterized protein from Homo sapiens (Human).